Here is a 105-residue protein sequence, read N- to C-terminus: Large ribosomal subunit protein uL22 (105 aa).

This sequence belongs to the universal ribosomal protein uL22 family. Part of the 50S ribosomal subunit.

Functionally, this protein binds specifically to 23S rRNA; its binding is stimulated by other ribosomal proteins, e.g. L4, L17, and L20. It is important during the early stages of 50S assembly. It makes multiple contacts with different domains of the 23S rRNA in the assembled 50S subunit and ribosome. Its function is as follows. The globular domain of the protein is located near the polypeptide exit tunnel on the outside of the subunit, while an extended beta-hairpin is found that lines the wall of the exit tunnel in the center of the 70S ribosome. This is Large ribosomal subunit protein uL22 from Sulfurimonas denitrificans (strain ATCC 33889 / DSM 1251) (Thiomicrospira denitrificans (strain ATCC 33889 / DSM 1251)).